A 446-amino-acid polypeptide reads, in one-letter code: Bifunctional protein GlmU (446 aa).

A pyrophosphorylase region spans residues 1-229; that stretch reads MTEKPVALIV…EAETLGINTR (229 aa). UDP-N-acetyl-alpha-D-glucosamine is bound by residues 11 to 14, lysine 25, glutamine 78, 83 to 84, 106 to 108, glycine 141, glutamate 155, asparagine 170, and asparagine 227; these read LAAG, GT, and YGD. Aspartate 108 contributes to the Mg(2+) binding site. Asparagine 227 is a Mg(2+) binding site. The linker stretch occupies residues 230-250; sequence AELAAAEAAFQVRARARALED. The segment at 251 to 446 is N-acetyltransferase; that stretch reads GVTMTDPATV…MQALRQKKGN (196 aa). Residues arginine 316 and lysine 334 each contribute to the UDP-N-acetyl-alpha-D-glucosamine site. Histidine 346 functions as the Proton acceptor in the catalytic mechanism. UDP-N-acetyl-alpha-D-glucosamine-binding residues include tyrosine 349 and asparagine 360. Acetyl-CoA-binding positions include alanine 363, 369 to 370, serine 388, serine 406, and arginine 423; that span reads NY.

This sequence in the N-terminal section; belongs to the N-acetylglucosamine-1-phosphate uridyltransferase family. In the C-terminal section; belongs to the transferase hexapeptide repeat family. As to quaternary structure, homotrimer. The cofactor is Mg(2+).

It localises to the cytoplasm. The enzyme catalyses alpha-D-glucosamine 1-phosphate + acetyl-CoA = N-acetyl-alpha-D-glucosamine 1-phosphate + CoA + H(+). It carries out the reaction N-acetyl-alpha-D-glucosamine 1-phosphate + UTP + H(+) = UDP-N-acetyl-alpha-D-glucosamine + diphosphate. The protein operates within nucleotide-sugar biosynthesis; UDP-N-acetyl-alpha-D-glucosamine biosynthesis; N-acetyl-alpha-D-glucosamine 1-phosphate from alpha-D-glucosamine 6-phosphate (route II): step 2/2. It participates in nucleotide-sugar biosynthesis; UDP-N-acetyl-alpha-D-glucosamine biosynthesis; UDP-N-acetyl-alpha-D-glucosamine from N-acetyl-alpha-D-glucosamine 1-phosphate: step 1/1. It functions in the pathway bacterial outer membrane biogenesis; LPS lipid A biosynthesis. Functionally, catalyzes the last two sequential reactions in the de novo biosynthetic pathway for UDP-N-acetylglucosamine (UDP-GlcNAc). The C-terminal domain catalyzes the transfer of acetyl group from acetyl coenzyme A to glucosamine-1-phosphate (GlcN-1-P) to produce N-acetylglucosamine-1-phosphate (GlcNAc-1-P), which is converted into UDP-GlcNAc by the transfer of uridine 5-monophosphate (from uridine 5-triphosphate), a reaction catalyzed by the N-terminal domain. In Paracoccus denitrificans (strain Pd 1222), this protein is Bifunctional protein GlmU.